The sequence spans 216 residues: Large ribosomal subunit protein uL3 (216 aa).

The interval 137 to 158 (GASHGAHKNHRKPGSIGGASTP) is disordered.

This sequence belongs to the universal ribosomal protein uL3 family. Part of the 50S ribosomal subunit. Forms a cluster with proteins L14 and L19.

In terms of biological role, one of the primary rRNA binding proteins, it binds directly near the 3'-end of the 23S rRNA, where it nucleates assembly of the 50S subunit. The chain is Large ribosomal subunit protein uL3 from Arthrobacter sp. (strain FB24).